The following is a 199-amino-acid chain: Probable molybdenum cofactor guanylyltransferase (199 aa).

GTP contacts are provided by residues 9-11 (LAG), lysine 21, aspartate 69, and aspartate 100. Aspartate 100 contributes to the Mg(2+) binding site.

The protein belongs to the MobA family. Requires Mg(2+) as cofactor.

The protein localises to the cytoplasm. It carries out the reaction Mo-molybdopterin + GTP + H(+) = Mo-molybdopterin guanine dinucleotide + diphosphate. Functionally, transfers a GMP moiety from GTP to Mo-molybdopterin (Mo-MPT) cofactor (Moco or molybdenum cofactor) to form Mo-molybdopterin guanine dinucleotide (Mo-MGD) cofactor. This Bacillus cytotoxicus (strain DSM 22905 / CIP 110041 / 391-98 / NVH 391-98) protein is Probable molybdenum cofactor guanylyltransferase.